The sequence spans 305 residues: Taste receptor type 2 member 136 (305 aa).

Residues 1-9 (MMSFLVSIA) are Extracellular-facing. A helical transmembrane segment spans residues 10–30 (SIAMLVKIVLGTFANVFIVLV). Residues 31-46 (NFTDCIKKRKFLLADR) lie on the Cytoplasmic side of the membrane. The helical transmembrane segment at 47–67 (ILTVLAIFRFDLLWIILMNWS) threads the bilayer. Over 68-69 (SS) the chain is Extracellular. The chain crosses the membrane as a helical span at residues 70 to 90 (VFHVGLYFQVRFCICVVWIVT). Topologically, residues 91-99 (NHFNTWLAN) are cytoplasmic. A helical membrane pass occupies residues 100-120 (ILSILYLLKIDNFSNLIFLGL). The Extracellular segment spans residues 121-127 (KGKIKCP). A helical membrane pass occupies residues 128–148 (YIVLLPCFVLLFPNLIMVTIC). Residues 149–176 (ETTQANGHQGNLTGKTKLTYFTNLIAMT) are Cytoplasmic-facing. Residues 177–197 (FTLGSLVPFTTFMICFLLLIC) traverse the membrane as a helical segment. The Extracellular segment spans residues 198–223 (SLCKHLRTMRLYGKGSQGPSASTHIK). The helical transmembrane segment at 224–244 (VLQVLISFLLLFSMFILLLII) threads the bilayer. The Cytoplasmic segment spans residues 245-305 (SDYNYTKSLE…ARFWLKEKKP (61 aa)).

The protein belongs to the G-protein coupled receptor T2R family.

It localises to the membrane. Functionally, putative taste receptor which may play a role in the perception of bitterness. The polypeptide is Taste receptor type 2 member 136 (Tas2r136) (Mus musculus (Mouse)).